The primary structure comprises 223 residues: uncharacterized protein (223 aa).

An N-terminal signal peptide occupies residues 1 to 22 (MHLKKALCPALCTFLIHLCLHA). A VWFA domain is found at 30–204 (DIFLMIDKSR…RSIAAAHSKR (175 aa)). Residues 199 to 223 (AAHSKRPTPTPPAKESSPRYTPSLD) are disordered.

This is an uncharacterized protein from Treponema pallidum (strain Nichols).